The chain runs to 374 residues: Pectate lyase 3 (374 aa).

The signal sequence occupies residues 1-22; it reads MKYLLPSTAAGLLLLAAQPTMA. A disulfide bond links cysteine 93 and cysteine 176. The Ca(2+) site is built by aspartate 150, aspartate 152, glutamate 187, and aspartate 191. Residue arginine 239 is part of the active site. Cysteine 350 and cysteine 373 are disulfide-bonded.

This sequence belongs to the polysaccharide lyase 1 family. PLADES subfamily. Ca(2+) is required as a cofactor.

It is found in the secreted. It carries out the reaction Eliminative cleavage of (1-&gt;4)-alpha-D-galacturonan to give oligosaccharides with 4-deoxy-alpha-D-galact-4-enuronosyl groups at their non-reducing ends.. Its pathway is glycan metabolism; pectin degradation; 2-dehydro-3-deoxy-D-gluconate from pectin: step 2/5. In terms of biological role, involved in maceration and soft-rotting of plant tissue. This chain is Pectate lyase 3 (pel3), found in Pectobacterium atrosepticum (strain SCRI 1043 / ATCC BAA-672) (Erwinia carotovora subsp. atroseptica).